The sequence spans 323 residues: MTKTKIIFMGTPQFAATVLKGLIDSNQYEILAVVTQPDRKVGRKQELRMTPVKELALTVNLPVLQPEKLSGSVEMTQIMTLLESGEVGIVTAAFGQFLPGKLLDVARFAVNTHASLLPKYRGGAPIHYAIMNGEKEAGVTIMEMIRKMDAGDMIAQNSTPILEEDNVGTMFEKLAFVGRDLLLETLPKYLEGQLKAQAQNEDEVTFSPNISPEEEKIDWNKSAREIFNKVRGMNPFPVAHTLWNGERFKIYESKVADEIVNNSDNPLQAGQIVEKTKKSLKVATGNGILELLTVQPAGKPKMDIVSFLNGLGQKMQVGDKLGD.

115 to 118 (SLLP) contacts (6S)-5,6,7,8-tetrahydrofolate.

This sequence belongs to the Fmt family.

The enzyme catalyses L-methionyl-tRNA(fMet) + (6R)-10-formyltetrahydrofolate = N-formyl-L-methionyl-tRNA(fMet) + (6S)-5,6,7,8-tetrahydrofolate + H(+). Its function is as follows. Attaches a formyl group to the free amino group of methionyl-tRNA(fMet). The formyl group appears to play a dual role in the initiator identity of N-formylmethionyl-tRNA by promoting its recognition by IF2 and preventing the misappropriation of this tRNA by the elongation apparatus. This Lactococcus lactis subsp. cremoris (strain SK11) protein is Methionyl-tRNA formyltransferase.